Consider the following 350-residue polypeptide: Putative ATP-binding protein BruAb2_0487 (350 aa).

Residues 4–234 (VSLRGISKTF…PANKFVAGFI (231 aa)) form the ABC transporter domain. An ATP-binding site is contributed by 36–43 (GPSGCGKS).

The protein belongs to the ABC transporter superfamily. As to quaternary structure, the complex is composed of two ATP-binding proteins (BruAb2_0487), two transmembrane proteins (BruAb2_0483) and a solute-binding protein (BruAb2_0484).

It is found in the cell inner membrane. Probably part of an ABC transporter complex. Probably responsible for energy coupling to the transport system. This is Putative ATP-binding protein BruAb2_0487 from Brucella abortus biovar 1 (strain 9-941).